Consider the following 89-residue polypeptide: Small ribosomal subunit protein bS16c (89 aa).

Belongs to the bacterial ribosomal protein bS16 family.

It is found in the plastid. The protein localises to the chloroplast. In Drimys granadensis, this protein is Small ribosomal subunit protein bS16c.